The following is a 269-amino-acid chain: Protein OPG079 (269 aa).

The protein belongs to the orthopoxvirus OPG079 family. In terms of assembly, homoomultimer (Potential). Interacts with the small subunit of ribonucleotide reductase. Interacts with host FAM111A; this interaction protomtes OPG079 degradation through autophagy.

It localises to the host cytoplasm. Its function is as follows. Plays an essential role in viral DNA replication. Binds to ssDNA with high affinity and localizes to cytoplasmic factories where nascent viral genomes accumulate. May disrupt loops, hairpins and other secondary structures present on ssDNA to reduce and eliminate pausing of viral DNA polymerase at specific sites during elongation. The protein is Protein OPG079 (OPG079) of Bos taurus (Bovine).